The chain runs to 513 residues: MEEIQIYLQLERSQQHDFLYPLIFQEYIYAFAHDRGFNRSISSENLGYDNKFSFLIVKRLISRMYQQNHFFISLNDSNKNLFCARNKNFDSQIISEVFACIVEIPFSIPYINLEWKKKKIVKPQNLRSIHSTFPFLEDNFSHLNLLVDILIPYPIHAEILVQTLRYWIKDASSLHLLRFFLHEYCILNSFIIPKKASSSFSNFSKRNPKLFLFLYNSHVCEYESVFLFLRNQSSHLRSTSSGVLLERIYFYRKIERLVNTFVKLKYFQPNLWFVKEPYIHYVSYQKIASLASKGTSLLMKKWKCYFVTFWQWYFSLWFHPKRIYIKQLSNQSFYFLGYLSSVRMNFSVVRSQILGKSFLINNVIKKFDTLVPTIPMIASLAKAKFCNVLGHPISKPVWADLSDSHIIDRFWRICRNISHYHSGSSKKKSLYRIKYILRLSCARTLARKHKSTVRTFLKKLGSELLKEFFRSEEDVFSLTFHKASPAFWEVYRSRIWYLDIICLNDLGNPKSQF.

This sequence belongs to the intron maturase 2 family. MatK subfamily.

The protein resides in the plastid. Its subcellular location is the chloroplast. Functionally, usually encoded in the trnK tRNA gene intron. Probably assists in splicing its own and other chloroplast group II introns. The polypeptide is Maturase K (Byblis liniflora (Carnivorous plant)).